A 61-amino-acid chain; its full sequence is uncharacterized protein (61 aa).

This is an uncharacterized protein from Saccharomyces cerevisiae (strain ATCC 204508 / S288c) (Baker's yeast).